The primary structure comprises 1490 residues: WD repeat-containing protein 7 (1490 aa).

WD repeat units lie at residues 17–56, 62–104, 156–199, 324–366, 404–443, 462–507, and 558–597; these read APTH…QINP, GHTA…CIEF, ISPD…SDMQ, LICP…DKQG, NEPL…IVQL, GHRN…MKHI, and RHLF…LDRC. Disordered stretches follow at residues 761-783 and 911-945; these read DEEE…YRSS and GDHM…IVQG. A compositionally biased stretch (basic and acidic residues) spans 768 to 782; it reads IMRQRREESDPEYRS. Ser-935 bears the Phosphoserine mark. The span at 936–945 shows a compositional bias: polar residues; sequence PPTSSNIVQG. WD repeat units follow at residues 1351-1390 and 1392-1432; these read PAIC…CQTI and GHKG…LGSI. Ser-1456 carries the post-translational modification Phosphoserine.

In Homo sapiens (Human), this protein is WD repeat-containing protein 7 (WDR7).